Here is a 273-residue protein sequence, read N- to C-terminus: Putative pyruvate, phosphate dikinase regulatory protein (273 aa).

ADP is bound at residue 153 to 160; the sequence is GISRTSKT.

The protein belongs to the pyruvate, phosphate/water dikinase regulatory protein family. PDRP subfamily.

It carries out the reaction N(tele)-phospho-L-histidyl/L-threonyl-[pyruvate, phosphate dikinase] + ADP = N(tele)-phospho-L-histidyl/O-phospho-L-threonyl-[pyruvate, phosphate dikinase] + AMP + H(+). It catalyses the reaction N(tele)-phospho-L-histidyl/O-phospho-L-threonyl-[pyruvate, phosphate dikinase] + phosphate + H(+) = N(tele)-phospho-L-histidyl/L-threonyl-[pyruvate, phosphate dikinase] + diphosphate. Its function is as follows. Bifunctional serine/threonine kinase and phosphorylase involved in the regulation of the pyruvate, phosphate dikinase (PPDK) by catalyzing its phosphorylation/dephosphorylation. The polypeptide is Putative pyruvate, phosphate dikinase regulatory protein (Rhizobium johnstonii (strain DSM 114642 / LMG 32736 / 3841) (Rhizobium leguminosarum bv. viciae)).